The following is a 155-amino-acid chain: Small ribosomal subunit protein uS7 (155 aa).

The protein belongs to the universal ribosomal protein uS7 family. As to quaternary structure, part of the 30S ribosomal subunit. Contacts proteins S9 and S11.

Its function is as follows. One of the primary rRNA binding proteins, it binds directly to 16S rRNA where it nucleates assembly of the head domain of the 30S subunit. Is located at the subunit interface close to the decoding center, probably blocks exit of the E-site tRNA. This is Small ribosomal subunit protein uS7 from Chlorobium phaeobacteroides (strain BS1).